The chain runs to 166 residues: HTH-type transcriptional regulator PecS (166 aa).

The HTH marR-type domain occupies 25–160 (PMLVIGTLSR…LRALLGRVEK (136 aa)).

It is found in the cytoplasm. The presence of PecM is required to ensure the full regulation of the pecS-pecM intergenic region by PecS. In terms of biological role, negatively regulates the expression of genes encoding pectinase and cellulase, which play a major role in virulence, and the expression of the blue pigment indigoidine, which is implicated in pathogenicity and protection from oxidative stress. Represses the expression of genes involved in indigoidine biosynthesis by binding to indA and indC promoter regions. Also binds to promoter sites in the pecS-pecM intergenic region and negatively autoregulates its expression as well as that of pecM. The sequence is that of HTH-type transcriptional regulator PecS from Dickeya dadantii (strain 3937) (Erwinia chrysanthemi (strain 3937)).